The primary structure comprises 297 residues: Cbb3-type cytochrome c oxidase subunit CcoP (297 aa).

Topologically, residues methionine 1–threonine 35 are cytoplasmic. Residues phenylalanine 36–phenylalanine 56 traverse the membrane as a helical segment. The Periplasmic segment spans residues serine 57–glutamine 297. Cytochrome c domains are found at residues tyrosine 108–serine 199 and valine 206–glycine 294. 8 residues coordinate heme c: cysteine 121, cysteine 124, histidine 125, methionine 174, cysteine 219, cysteine 222, histidine 223, and methionine 264.

Belongs to the CcoP / FixP family. In terms of assembly, component of the cbb3-type cytochrome c oxidase at least composed of CcoN, CcoO, CcoQ and CcoP. Interacts with CcoQ. The cofactor is heme c.

It localises to the cell inner membrane. It functions in the pathway energy metabolism; oxidative phosphorylation. Its function is as follows. C-type cytochrome. Part of the cbb3-type cytochrome c oxidase complex. CcoP subunit is required for transferring electrons from donor cytochrome c via its heme groups to CcoO subunit. From there, electrons are shuttled to the catalytic binuclear center of CcoN subunit where oxygen reduction takes place. The complex also functions as a proton pump. The protein is Cbb3-type cytochrome c oxidase subunit CcoP of Rhodobacter capsulatus (Rhodopseudomonas capsulata).